Reading from the N-terminus, the 255-residue chain is Pyrroloquinoline-quinone synthase (255 aa).

Belongs to the PqqC family.

It carries out the reaction 6-(2-amino-2-carboxyethyl)-7,8-dioxo-1,2,3,4,7,8-hexahydroquinoline-2,4-dicarboxylate + 3 O2 = pyrroloquinoline quinone + 2 H2O2 + 2 H2O + H(+). It functions in the pathway cofactor biosynthesis; pyrroloquinoline quinone biosynthesis. In terms of biological role, ring cyclization and eight-electron oxidation of 3a-(2-amino-2-carboxyethyl)-4,5-dioxo-4,5,6,7,8,9-hexahydroquinoline-7,9-dicarboxylic-acid to PQQ. The sequence is that of Pyrroloquinoline-quinone synthase from Cereibacter sphaeroides (strain ATCC 17029 / ATH 2.4.9) (Rhodobacter sphaeroides).